The sequence spans 253 residues: 5'/3'-nucleotidase SurE (253 aa).

Positions 8, 9, 39, and 92 each coordinate a divalent metal cation.

This sequence belongs to the SurE nucleotidase family. A divalent metal cation serves as cofactor.

The protein resides in the cytoplasm. The catalysed reaction is a ribonucleoside 5'-phosphate + H2O = a ribonucleoside + phosphate. It carries out the reaction a ribonucleoside 3'-phosphate + H2O = a ribonucleoside + phosphate. It catalyses the reaction [phosphate](n) + H2O = [phosphate](n-1) + phosphate + H(+). Functionally, nucleotidase with a broad substrate specificity as it can dephosphorylate various ribo- and deoxyribonucleoside 5'-monophosphates and ribonucleoside 3'-monophosphates with highest affinity to 3'-AMP. Also hydrolyzes polyphosphate (exopolyphosphatase activity) with the preference for short-chain-length substrates (P20-25). Might be involved in the regulation of dNTP and NTP pools, and in the turnover of 3'-mononucleotides produced by numerous intracellular RNases (T1, T2, and F) during the degradation of various RNAs. The sequence is that of 5'/3'-nucleotidase SurE from Salmonella paratyphi A (strain AKU_12601).